A 66-amino-acid polypeptide reads, in one-letter code: Large ribosomal subunit protein bL35 (66 aa).

Positions 1–24 are enriched in basic residues; the sequence is MPKQKTHRGAAKRFKKTGSGKLKR. A disordered region spans residues 1–26; that stretch reads MPKQKTHRGAAKRFKKTGSGKLKRDH.

Belongs to the bacterial ribosomal protein bL35 family.

This chain is Large ribosomal subunit protein bL35, found in Bacillus cytotoxicus (strain DSM 22905 / CIP 110041 / 391-98 / NVH 391-98).